We begin with the raw amino-acid sequence, 211 residues long: Large ribosomal subunit protein bL25 (211 aa).

Disordered regions lie at residues 1-23 (MAGE…AARQ) and 191-211 (LRSA…AEEV). Acidic residues predominate over residues 196–211 (NEADEEETEEATAEEV).

It belongs to the bacterial ribosomal protein bL25 family. CTC subfamily. In terms of assembly, part of the 50S ribosomal subunit; part of the 5S rRNA/L5/L18/L25 subcomplex. Contacts the 5S rRNA. Binds to the 5S rRNA independently of L5 and L18.

In terms of biological role, this is one of the proteins that binds to the 5S RNA in the ribosome where it forms part of the central protuberance. The chain is Large ribosomal subunit protein bL25 from Dinoroseobacter shibae (strain DSM 16493 / NCIMB 14021 / DFL 12).